A 493-amino-acid chain; its full sequence is uncharacterized protein (493 aa).

Residue 8–37 (DFLVVGGGTCGCVVAARLSEDPSATVMLLE) coordinates FAD. H429 (proton acceptor) is an active-site residue.

This sequence belongs to the GMC oxidoreductase family. Requires FAD as cofactor.

This is an uncharacterized protein from Rhodococcus erythropolis (Arthrobacter picolinophilus).